Consider the following 127-residue polypeptide: Prefoldin subunit 6 (127 aa).

Alanine 2 is subject to N-acetylalanine. Lysine 21 carries the N6-acetyllysine modification. N6-acetyllysine; alternate is present on lysine 66. Residue lysine 66 forms a Glycyl lysine isopeptide (Lys-Gly) (interchain with G-Cter in SUMO1); alternate linkage. Lysine 66 is covalently cross-linked (Glycyl lysine isopeptide (Lys-Gly) (interchain with G-Cter in SUMO2); alternate).

The protein belongs to the prefoldin subunit beta family. As to quaternary structure, heterohexamer of two PFD-alpha type and four PFD-beta type subunits. Component of the PAQosome complex which is responsible for the biogenesis of several protein complexes and which consists of R2TP complex members RUVBL1, RUVBL2, RPAP3 and PIH1D1, URI complex members PFDN2, PFDN6, PDRG1, UXT and URI1 as well as ASDURF, POLR2E and DNAAF10/WDR92.

Functionally, binds specifically to cytosolic chaperonin (c-CPN) and transfers target proteins to it. Binds to nascent polypeptide chain and promotes folding in an environment in which there are many competing pathways for nonnative proteins. The protein is Prefoldin subunit 6 (Pfdn6) of Mus musculus (Mouse).